Reading from the N-terminus, the 154-residue chain is Aspartate carbamoyltransferase regulatory chain (154 aa).

Residues Cys109, Cys114, Cys138, and Cys141 each contribute to the Zn(2+) site.

It belongs to the PyrI family. In terms of assembly, contains catalytic and regulatory chains. Requires Zn(2+) as cofactor.

Involved in allosteric regulation of aspartate carbamoyltransferase. This chain is Aspartate carbamoyltransferase regulatory chain, found in Pectobacterium carotovorum subsp. carotovorum (strain PC1).